We begin with the raw amino-acid sequence, 101 residues long: Small integral membrane protein 21 (101 aa).

The chain crosses the membrane as a helical span at residues 49 to 65 (HIRFFTLLVLFHVMVLL).

The protein localises to the membrane. The polypeptide is Small integral membrane protein 21 (SMIM21) (Homo sapiens (Human)).